We begin with the raw amino-acid sequence, 199 residues long: 7-methyl-GTP pyrophosphatase (199 aa).

Asp-76 (proton acceptor) is an active-site residue.

This sequence belongs to the Maf family. YceF subfamily. A divalent metal cation serves as cofactor.

The protein localises to the cytoplasm. It carries out the reaction N(7)-methyl-GTP + H2O = N(7)-methyl-GMP + diphosphate + H(+). In terms of biological role, nucleoside triphosphate pyrophosphatase that hydrolyzes 7-methyl-GTP (m(7)GTP). May have a dual role in cell division arrest and in preventing the incorporation of modified nucleotides into cellular nucleic acids. This is 7-methyl-GTP pyrophosphatase from Nitrosococcus oceani (strain ATCC 19707 / BCRC 17464 / JCM 30415 / NCIMB 11848 / C-107).